Reading from the N-terminus, the 330-residue chain is Serine/threonine-protein phosphatase PP1-alpha catalytic subunit (330 aa).

S2 carries the N-acetylserine modification. S2 and S22 each carry phosphoserine. Mn(2+)-binding residues include D64, H66, D92, and N124. H125 (proton donor) is an active-site residue. Residues H173 and H248 each coordinate Mn(2+). Position 305 is an N6-acetyllysine (K305). Y306 carries the phosphotyrosine modification. The disordered stretch occupies residues 306–330 (YGQFSGLNPGGRPITPPRNSAKAKK). T320 is subject to Phosphothreonine. The residue at position 325 (S325) is a Phosphoserine.

It belongs to the PPP phosphatase family. PP-1 subfamily. In terms of assembly, PP1 comprises a catalytic subunit, PPP1CA, PPP1CB or PPP1CC, which is folded into its native form by inhibitor 2 and glycogen synthetase kinase 3, and then complexed to one or several targeting or regulatory subunits. PPP1R12A, PPP1R12B and PPP1R12C mediate binding to myosin. PPP1R3A (in skeletal muscle), PPP1R3B (in liver), PPP1R3C, PPP1R3D and PPP1R3F (in brain) mediate binding to glycogen. Interacts with PPP1R39. Interacts with BTBD10. Interacts with KCTD20. Interacts with PPP1R9A and PPP1R9B. Part of a complex containing PPP1R15B, PP1 and NCK1/2. Interacts with PHACTR4; which acts as an activator of PP1 activity. Interacts with PPP1R15A and PPP1R15B; the interactions mediate binding to EIF2S1. Interacts with PPP1R7. Interacts with YLPM1. Forms a complex with ILF2, ILF3, YLPM1, KHDRBS1, RBMX and NCOA5. Interacts with NOM1 and PPP1R8. Interacts with PPP1R16B. Interacts with RPSA only in the presence of PPP1R16B. Component of the PNUTS-PP1 phosphatase complex, composed of PPP1R10/PNUTS, TOX4, WDR82, and PPP1CA or PPP1CB or PPP1CC. Interacts with PPP1R10/PNUTS and PPP1R8. Interacts with WDR82 in the presence of PPP1R10/PNUTS. Interacts with TRIM28; the interaction dephosphorylates TRIM28 on 'Ser-824' and forms a complex at the p21 promoter site. Interacts with isoform 1 and isoform 4 of NEK2. Interacts with FER; this promotes phosphorylation at Thr-320. Interacts with DAB2; the interaction is mutually exclusive with the AXIN1:PPP1CA interaction. Interacts with FOXP3. Interacts with CENPA. Interacts with ATG16L1. Found in a complex with PPP1CA, PPP1CC, SHC1 and PEAK1. Interacts with tensin TNS1. Interacts with SAXO4, PPP1R21, PPP1R26, PPP1R27, PPP1R35, PPP1R36, PPP1R37, SH3RF2, ELFN1 and ELFN2. Interacts with TPRN; the interaction results in inhibition of PPC1A phosphatase activity. Interacts with SKA1 (via C-terminus); the interaction is direct and required for the recruitment of PP1 to the kinetochore. Interacts with the KNL1 complex subunit KNL1; the interaction is direct and mutually exclusive with KNL1 binding to microtubules. Component of the SHOC2-MRAS-PP1c (SMP) complex consisting of SHOC2, GTP-bound M-Ras/MRAS and the catalytic subunit of protein phosphatase 1 (either PPP1CA, PPP1CB or PPP1CC). SHOC2 and PP1c preferably bind M-Ras/MRAS, but they also bind K-Ras/KRAS, N-Ras/NRAS and H-Ras/HRAS; these interactions are GTP-dependent and both SHOC2 and PP1c are required to form a stable complex. Interacts with SHOC2 in the absence of Ras GTPases. (Microbial infection) Interacts with HHV-1 ICP34.5. As to quaternary structure, (Microbial infection) Interacts with Venezuelan equine encephalitis virus (VEEV) capsid protein; this interaction dephosphorylates the capsid protein, which increases its ability to bind to the viral genome. Requires Fe cation as cofactor. The cofactor is Mn(2+). Post-translationally, phosphorylated. Dephosphorylated at Thr-320 in the presence of ionizing radiation.

The protein resides in the cytoplasm. It localises to the nucleus. It is found in the nucleoplasm. Its subcellular location is the nucleolus. The enzyme catalyses O-phospho-L-seryl-[protein] + H2O = L-seryl-[protein] + phosphate. The catalysed reaction is O-phospho-L-threonyl-[protein] + H2O = L-threonyl-[protein] + phosphate. With respect to regulation, the phosphatase activity of the PPP1R15A-PP1 complex toward EIF2S1 is specifically inhibited by Salubrinal, a drug that protects cells from endoplasmic reticulum stress. Its function is as follows. Protein phosphatase that associates with over 200 regulatory proteins to form highly specific holoenzymes which dephosphorylate hundreds of biological targets. Protein phosphatase 1 (PP1) is essential for cell division, transcription elongation, and participates in the regulation of glycogen metabolism, muscle contractility and protein synthesis. Involved in regulation of ionic conductances and long-term synaptic plasticity. May play an important role in dephosphorylating substrates such as the postsynaptic density-associated Ca(2+)/calmodulin dependent protein kinase II. Catalytic component of the PNUTS-PP1 protein phosphatase complex, a protein phosphatase 1 (PP1) complex that promotes RNA polymerase II transcription pause-release, allowing transcription elongation: the PNUTS-PP1 complex mediates the release of RNA polymerase II from promoter-proximal region of genes by catalyzing dephosphorylation of proteins involved in transcription, such as AFF4, CDK9, MEPCE, INTS12, NCBP1, POLR2M/GDOWN1 and SUPT6H. The PNUTS-PP1 complex also regulates transcription termination by mediating dephosphorylation of SUPT5H in termination zones downstream of poly(A) sites, thereby promoting deceleration of RNA polymerase II transcription. PNUTS-PP1 complex is also involved in the response to replication stress by mediating dephosphorylation of POLR2A at 'Ser-5' of the CTD, promoting RNA polymerase II degradation. PNUTS-PP1 also plays a role in the control of chromatin structure and cell cycle progression during the transition from mitosis into interphase. Regulates NEK2 function in terms of kinase activity and centrosome number and splitting, both in the presence and absence of radiation-induced DNA damage. Regulator of neural tube and optic fissure closure, and enteric neural crest cell (ENCCs) migration during development. In balance with CSNK1D and CSNK1E, determines the circadian period length, through the regulation of the speed and rhythmicity of PER1 and PER2 phosphorylation. May dephosphorylate CSNK1D and CSNK1E. Dephosphorylates the 'Ser-418' residue of FOXP3 in regulatory T-cells (Treg) from patients with rheumatoid arthritis, thereby inactivating FOXP3 and rendering Treg cells functionally defective. Dephosphorylates CENPA. Dephosphorylates the 'Ser-139' residue of ATG16L1 causing dissociation of ATG12-ATG5-ATG16L1 complex, thereby inhibiting autophagy. Together with PPP1CC (PP1-gamma subunit), dephosphorylates IFIH1/MDA5 and RIG-I leading to their activation and a functional innate immune response. Core component of the SHOC2-MRAS-PP1c (SMP) holophosphatase complex that regulates the MAPK pathway activation. The SMP complex specifically dephosphorylates the inhibitory phosphorylation at 'Ser-259' of RAF1 kinase, 'Ser-365' of BRAF kinase and 'Ser-214' of ARAF kinase, stimulating their kinase activities. The SMP complex enhances the dephosphorylation activity and substrate specificity of PP1c. Functionally, (Microbial infection) Necessary for alphaviruses replication. This Homo sapiens (Human) protein is Serine/threonine-protein phosphatase PP1-alpha catalytic subunit (PPP1CA).